A 239-amino-acid chain; its full sequence is Ribosomal RNA large subunit methyltransferase E (239 aa).

A disordered region spans residues 1–20; sequence MTKAPIAGNRTGRKLGQRVK. Basic residues predominate over residues 11 to 20; sequence TGRKLGQRVK. S-adenosyl-L-methionine contacts are provided by Gly-81, Trp-83, Asp-104, Asp-120, and Asp-144. Lys-184 functions as the Proton acceptor in the catalytic mechanism.

It belongs to the class I-like SAM-binding methyltransferase superfamily. RNA methyltransferase RlmE family.

The protein resides in the cytoplasm. It carries out the reaction uridine(2552) in 23S rRNA + S-adenosyl-L-methionine = 2'-O-methyluridine(2552) in 23S rRNA + S-adenosyl-L-homocysteine + H(+). In terms of biological role, specifically methylates the uridine in position 2552 of 23S rRNA at the 2'-O position of the ribose in the fully assembled 50S ribosomal subunit. The protein is Ribosomal RNA large subunit methyltransferase E of Rhizobium leguminosarum bv. trifolii (strain WSM2304).